The chain runs to 507 residues: Arabinose import ATP-binding protein AraG (507 aa).

ABC transporter domains are found at residues 8–243 (LSFH…MVGR) and 255–499 (PHGE…MLRI). 40–47 (GENGAGKS) lines the ATP pocket.

This sequence belongs to the ABC transporter superfamily. Arabinose importer (TC 3.A.1.2.2) family. In terms of assembly, the complex is composed of two ATP-binding proteins (AraG), two transmembrane proteins (AraH) and a solute-binding protein (AraF).

The protein localises to the cell inner membrane. The enzyme catalyses L-arabinose(out) + ATP + H2O = L-arabinose(in) + ADP + phosphate + H(+). In terms of biological role, part of the ABC transporter complex AraFGH involved in arabinose import. Responsible for energy coupling to the transport system. This is Arabinose import ATP-binding protein AraG from Pectobacterium atrosepticum (strain SCRI 1043 / ATCC BAA-672) (Erwinia carotovora subsp. atroseptica).